Here is a 225-residue protein sequence, read N- to C-terminus: ATP-dependent dethiobiotin synthetase BioD (225 aa).

Gly12–Val17 is a binding site for ATP. Thr16 serves as a coordination point for Mg(2+). Residue Lys37 is part of the active site. Residue Thr41 participates in substrate binding. ATP contacts are provided by residues Asp46, Glu105–Gly108, Gly166–Ser167, and Pro196–Gly198. Mg(2+)-binding residues include Asp46 and Glu105.

Belongs to the dethiobiotin synthetase family. Homodimer. Requires Mg(2+) as cofactor.

Its subcellular location is the cytoplasm. The catalysed reaction is (7R,8S)-7,8-diammoniononanoate + CO2 + ATP = (4R,5S)-dethiobiotin + ADP + phosphate + 3 H(+). It participates in cofactor biosynthesis; biotin biosynthesis; biotin from 7,8-diaminononanoate: step 1/2. Catalyzes a mechanistically unusual reaction, the ATP-dependent insertion of CO2 between the N7 and N8 nitrogen atoms of 7,8-diaminopelargonic acid (DAPA, also called 7,8-diammoniononanoate) to form a ureido ring. The polypeptide is ATP-dependent dethiobiotin synthetase BioD (Mycobacteroides abscessus (strain ATCC 19977 / DSM 44196 / CCUG 20993 / CIP 104536 / JCM 13569 / NCTC 13031 / TMC 1543 / L948) (Mycobacterium abscessus)).